Reading from the N-terminus, the 395-residue chain is Flap endonuclease 1 (395 aa).

The interval 1-104 (MGIKQLFQII…GELAKRFQRK (104 aa)) is N-domain. Residue aspartate 34 participates in Mg(2+) binding. Positions 47 and 70 each coordinate DNA. 5 residues coordinate Mg(2+): aspartate 86, glutamate 158, glutamate 160, aspartate 179, and aspartate 181. The segment at 122–253 (DIEKFSRRTV…TTALKLIRDH (132 aa)) is I-domain. Glutamate 158 contributes to the DNA binding site. DNA is bound by residues glycine 231 and aspartate 233. Aspartate 233 provides a ligand contact to Mg(2+). Positions 341–349 (QQARLEGFF) are interaction with PCNA. Positions 344–395 (RLEGFFKPVPKTDAQKAAHKRKLEEKNEEKKKKLKQEKKDKAAAKSKPRGAA) are disordered. The segment covering 365–386 (KLEEKNEEKKKKLKQEKKDKAA) has biased composition (basic and acidic residues).

It belongs to the XPG/RAD2 endonuclease family. FEN1 subfamily. Interacts with PCNA. Three molecules of FEN1 bind to one PCNA trimer with each molecule binding to one PCNA monomer. PCNA stimulates the nuclease activity without altering cleavage specificity. Mg(2+) serves as cofactor. Phosphorylated. Phosphorylation upon DNA damage induces relocalization to the nuclear plasma.

The protein resides in the nucleus. The protein localises to the nucleolus. It is found in the nucleoplasm. Its subcellular location is the mitochondrion. Structure-specific nuclease with 5'-flap endonuclease and 5'-3' exonuclease activities involved in DNA replication and repair. During DNA replication, cleaves the 5'-overhanging flap structure that is generated by displacement synthesis when DNA polymerase encounters the 5'-end of a downstream Okazaki fragment. It enters the flap from the 5'-end and then tracks to cleave the flap base, leaving a nick for ligation. Also involved in the long patch base excision repair (LP-BER) pathway, by cleaving within the apurinic/apyrimidinic (AP) site-terminated flap. Acts as a genome stabilization factor that prevents flaps from equilibrating into structures that lead to duplications and deletions. Also possesses 5'-3' exonuclease activity on nicked or gapped double-stranded DNA, and exhibits RNase H activity. Also involved in replication and repair of rDNA and in repairing mitochondrial DNA. The protein is Flap endonuclease 1 of Fusarium vanettenii (strain ATCC MYA-4622 / CBS 123669 / FGSC 9596 / NRRL 45880 / 77-13-4) (Fusarium solani subsp. pisi).